The sequence spans 480 residues: G-protein coupled receptor seb-2 (480 aa).

Over 1–222 (MNPSISTAGA…CMSNGDVEAR (222 aa)) the chain is Extracellular. Asn-95 is a glycosylation site (N-linked (GlcNAc...) asparagine). A helical membrane pass occupies residues 223–243 (ILAGLLTYSASVIFLIPAVFL). Residues 244–261 (LTLLRPIRCQPMFILHRH) lie on the Cytoplasmic side of the membrane. A helical membrane pass occupies residues 262–282 (LLISCLLYGAFYLITVSLFVV). At 283-305 (NDAPLSSQVFQNHLFCRLLFSIQ) the chain is on the extracellular side. A helical membrane pass occupies residues 306 to 328 (LRYLRLTNFTWMLAEAVYLWRLL). The Cytoplasmic segment spans residues 329–343 (HTAQHSEGETLRSYK). The chain crosses the membrane as a helical span at residues 344-364 (VICWGVPGVITVVYIFVRSLN). Over 365 to 386 (DDVGMCWIENSTVAWIEWMIIT) the chain is Extracellular. A helical membrane pass occupies residues 387–407 (PSLLAMGVNLLLLGLIVYILV). The Cytoplasmic portion of the chain corresponds to 408–423 (KKLRCDPHLERIQYRK). Residues 424–444 (AVRGALMLIPVFGVQQLLTIY) form a helical membrane-spanning segment. Residues 445–480 (RFRNVCLIYRLLHKSFCRRMCSEILVITSGEAGSRS) lie on the Extracellular side of the membrane.

This sequence belongs to the G-protein coupled receptor 2 family. Present in the head body-wall muscles from the L1 larval stage through to adulthood. Also expressed between L4 and the adult molt in vulval vm1 muscle cells. These cells play a role in opening the vulva during egg laying.

The protein resides in the cell membrane. Functionally, not known. Putative receptor. This is G-protein coupled receptor seb-2 from Caenorhabditis elegans.